The following is a 283-amino-acid chain: Bifunctional protein FolD (283 aa).

Residues 163–165 (GRS), Ser188, and Ile229 each bind NADP(+).

Belongs to the tetrahydrofolate dehydrogenase/cyclohydrolase family. As to quaternary structure, homodimer.

The catalysed reaction is (6R)-5,10-methylene-5,6,7,8-tetrahydrofolate + NADP(+) = (6R)-5,10-methenyltetrahydrofolate + NADPH. It catalyses the reaction (6R)-5,10-methenyltetrahydrofolate + H2O = (6R)-10-formyltetrahydrofolate + H(+). It participates in one-carbon metabolism; tetrahydrofolate interconversion. Catalyzes the oxidation of 5,10-methylenetetrahydrofolate to 5,10-methenyltetrahydrofolate and then the hydrolysis of 5,10-methenyltetrahydrofolate to 10-formyltetrahydrofolate. The protein is Bifunctional protein FolD of Campylobacter concisus (strain 13826).